Here is a 431-residue protein sequence, read N- to C-terminus: Histidinol dehydrogenase (431 aa).

Residues Tyr130, Gln191, and Asn214 each coordinate NAD(+). Substrate-binding residues include Ser237, Gln259, and His262. Gln259 and His262 together coordinate Zn(2+). Catalysis depends on proton acceptor residues Glu327 and His328. The substrate site is built by His328, Asp361, Glu415, and His420. Zn(2+) is bound at residue Asp361. Zn(2+) is bound at residue His420.

It belongs to the histidinol dehydrogenase family. Zn(2+) serves as cofactor.

It carries out the reaction L-histidinol + 2 NAD(+) + H2O = L-histidine + 2 NADH + 3 H(+). It functions in the pathway amino-acid biosynthesis; L-histidine biosynthesis; L-histidine from 5-phospho-alpha-D-ribose 1-diphosphate: step 9/9. Its function is as follows. Catalyzes the sequential NAD-dependent oxidations of L-histidinol to L-histidinaldehyde and then to L-histidine. The protein is Histidinol dehydrogenase of Syntrophotalea carbinolica (strain DSM 2380 / NBRC 103641 / GraBd1) (Pelobacter carbinolicus).